Reading from the N-terminus, the 644-residue chain is G-protein coupled receptor-associated protein LMBRD2 (644 aa).

Residues 1-4 (MGTV) lie on the Extracellular side of the membrane. The helical transmembrane segment at 5–27 (SLAVQLFIVFLLTSYLLNKYSTI) threads the bilayer. Over 28–31 (RKQN) the chain is Cytoplasmic. A helical transmembrane segment spans residues 32 to 52 (PIVTISTFIGWYFSLIIVFVL). Residues 53–102 (PLDVAITFFHKCENDRQRVLNTTSTPAPIVPECELPGGYVPDDVLFDLWR) lie on the Extracellular side of the membrane. Asn73 carries N-linked (GlcNAc...) asparagine glycosylation. A helical membrane pass occupies residues 103–123 (VVYWSAQILTWLILPLLQSYV). The Cytoplasmic segment spans residues 124–145 (TAGNFTIFGKIRAAVINNTVYY). A helical transmembrane segment spans residues 146–166 (AIYSLCFLAILIYAMFKGVSI). Over 167-172 (NIENLK) the chain is Extracellular. A helical membrane pass occupies residues 173–193 (VILVSASNTWGLFLLVVLLGH). The Cytoplasmic segment spans residues 194 to 369 (GLVELPRSLW…RLQTPFCRVL (176 aa)). Residues 216–245 (YFDIEKLASEKSEAEENVKEIYKKVRVLFN) adopt a coiled-coil conformation. The helical transmembrane segment at 370–390 (GVVTVFMTFFVLFSECTFFVV) threads the bilayer. At 391–412 (SYTVSPAAFVTEYASNRFHYKY) the chain is on the extracellular side. A helical membrane pass occupies residues 413–433 (TQFVAFGIIVYLITCAYFTIF). Residues 434 to 453 (RLQIYKYYHLDPNGHTDENS) are Cytoplasmic-facing. The helical transmembrane segment at 454 to 474 (ILFSAILLCRLTPPICLNFLG) threads the bilayer. Residues 475–502 (MIHMDSHVSMAKSFGVETQFTKLMGHLD) are Extracellular-facing. Residues 503–523 (VIPILAKGINIYLPICIILLC) form a helical membrane-spanning segment. Residues 524-644 (AIHYYRVGAY…PSSSGFFDDM (121 aa)) lie on the Cytoplasmic side of the membrane. Residues 567 to 576 (SIKRSNERNQ) are compositionally biased toward basic and acidic residues. The interval 567–644 (SIKRSNERNQ…PSSSGFFDDM (78 aa)) is disordered. Residues 578 to 594 (NQSWTNTITSNTSTTSN) show a composition bias toward low complexity. Residues 621–644 (VSSTTRISLSPTEHPSSSGFFDDM) are compositionally biased toward polar residues.

It belongs to the LIMR family.

The protein localises to the cell membrane. Its function is as follows. May associate with G-protein coupled receptors and regulate downstream signaling pathways. The polypeptide is G-protein coupled receptor-associated protein LMBRD2 (Caenorhabditis briggsae).